We begin with the raw amino-acid sequence, 207 residues long: Fibroblast growth factor 18 (207 aa).

The N-terminal stretch at 1-27 (MYSAPSACTCLCLHFLLLCFQVQVLVA) is a signal peptide. Asn39 carries N-linked (GlcNAc...) asparagine glycosylation. An intrachain disulfide couples Cys109 to Cys127. The N-linked (GlcNAc...) asparagine glycan is linked to Asn137. The tract at residues 157-186 (GRPRKGPKTRENQQDVHFMKRYPKGQPELQ) is disordered. Residues 164-174 (KTRENQQDVHF) are compositionally biased toward basic and acidic residues.

Belongs to the heparin-binding growth factors family. In terms of assembly, interacts with FGFR3 and FGFR4.

It localises to the secreted. Plays an important role in the regulation of cell proliferation, cell differentiation and cell migration. Required for normal ossification and bone development. Stimulates hepatic and intestinal proliferation. This Homo sapiens (Human) protein is Fibroblast growth factor 18 (FGF18).